Here is a 461-residue protein sequence, read N- to C-terminus: UDP-N-acetylmuramate--L-alanine ligase (461 aa).

112–118 (GTHGKTT) contributes to the ATP binding site.

This sequence belongs to the MurCDEF family.

The protein localises to the cytoplasm. The catalysed reaction is UDP-N-acetyl-alpha-D-muramate + L-alanine + ATP = UDP-N-acetyl-alpha-D-muramoyl-L-alanine + ADP + phosphate + H(+). The protein operates within cell wall biogenesis; peptidoglycan biosynthesis. In terms of biological role, cell wall formation. This chain is UDP-N-acetylmuramate--L-alanine ligase, found in Geobacter sp. (strain M21).